The chain runs to 491 residues: Allene oxide synthase 3 (491 aa).

Residues Lys104, His135, and Lys139 each coordinate heme b. Positions 296 and 302 each coordinate (13S)-hydroperoxy-(9Z,11E)-octadecadienoate. Asn296 contributes to the (13S)-hydroperoxy-(9Z,11E,15Z)-octadecatrienoate binding site. The heme b site is built by Lys442 and Cys444.

Belongs to the cytochrome P450 family. Heme b serves as cofactor. As to expression, expressed in roots. Not detected in aerial tissues, including cotyledons, leaves, stems and flower buds.

The catalysed reaction is (13S)-hydroperoxy-(9Z,11E,15Z)-octadecatrienoate = (9Z,13S,15Z)-12,13-epoxyoctadeca-9,11,15-trienoate + H2O. It carries out the reaction (13S)-hydroperoxy-(9Z,11E)-octadecadienoate = (9Z,13S)-12,13-epoxyoctadeca-9,11-dienoate + H2O. The enzyme catalyses (9Z,13S,15Z)-12,13-epoxyoctadeca-9,11,15-trienoate = (9S,13S,15Z)-12-oxophyto-10,15-dienoate. Its function is as follows. Cytochrome P450 metabolizing both 13- and 9-hydroperoxides of linoleic and linolenic acids, but with a marked preference for 9-hydroperoxy fatty acids. Catalyzes not only the synthesis of allene oxide, but also its hydrolysis and cyclization. The first step is the synthesis of (12Z)-9,10-epoxyoctadeca-10,12-dienoic acid (9,10-EOD) and the final products are (9R)-alpha-ketol and the racemic cis-10-oxo-11-phytoenoic acid. The cyclase activity possesses regiospecificity and (9Z)-12,13-epoxyoctadeca-9,11-dienoic acid (12,13-EOD) is significantly less efficient as a substrate for cyclopentenone production than 9,10-EOD. Has no hydroperoxide lyase activity. May play a defensive role against soil-borne pests that affect roots or juvenile tissues as they emerge from the germinating seed. The chain is Allene oxide synthase 3 from Solanum lycopersicum (Tomato).